The chain runs to 257 residues: Membrane protein insertase YidC 1 (257 aa).

A signal peptide spans 1–20 (MYRKFGMAAMLVSILLLMTG). C21 is lipidated: N-palmitoyl cysteine. Residue C21 is the site of S-diacylglycerol cysteine attachment. 5 helical membrane-spanning segments follow: residues 35–55 (IWDS…ANAF), 59–79 (FGLA…PLMI), 129–149 (LAGC…YHAI), 160–180 (FLWF…AGIT), and 205–225 (VMIL…WVIG).

It belongs to the OXA1/ALB3/YidC family. Type 2 subfamily.

Its subcellular location is the cell membrane. Required for the insertion and/or proper folding and/or complex formation of integral membrane proteins into the membrane. Involved in integration of membrane proteins that insert both dependently and independently of the Sec translocase complex, as well as at least some lipoproteins. The polypeptide is Membrane protein insertase YidC 1 (Halalkalibacterium halodurans (strain ATCC BAA-125 / DSM 18197 / FERM 7344 / JCM 9153 / C-125) (Bacillus halodurans)).